Here is a 381-residue protein sequence, read N- to C-terminus: uncharacterized protein (381 aa).

The helical transmembrane segment at 3-23 (GAVAGLVFLAVLVIFAIIVVA) threads the bilayer.

It belongs to the band 7/mec-2 family.

The protein resides in the membrane. This is an uncharacterized protein from Mycobacterium bovis (strain ATCC BAA-935 / AF2122/97).